We begin with the raw amino-acid sequence, 453 residues long: CAAX prenyl protease 1 (453 aa).

Residues 1 to 12 (MFDLKTILDHPN) lie on the Lumenal side of the membrane. Residues 13-33 (IPWKLIISGFSIAQFSFESYL) traverse the membrane as a helical segment. At 34–89 (TYRQYQKLSETKLPPVLEDEIDDETFHKSRNYSRAKAKFSIFGDVYNLAQKLVFIK) the chain is on the cytoplasmic side. Residues 90–110 (YDLFPKIWHMAVSLLNAVLPV) form a helical membrane-spanning segment. The Lumenal segment spans residues 111–121 (RFHMVSTVAQS). A helical transmembrane segment spans residues 122-142 (LCFLGLLSSLSTLVDLPLSYY). At 143 to 167 (SHFVLEEKFGFNKLTVQLWITDMIK) the chain is on the cytoplasmic side. The chain crosses the membrane as a helical span at residues 168–188 (SLTLAYAIGGPILYLFLKIFD). At 189–197 (KFPTDFLWY) the chain is on the lumenal side. A helical membrane pass occupies residues 198–218 (IMVFLFVVQILAMTIIPVFIM). The Cytoplasmic portion of the chain corresponds to 219 to 306 (PMFNKFTPLE…HEIGHWQKNH (88 aa)). Zn(2+) is bound at residue H297. E298 is a catalytic residue. H301 provides a ligand contact to Zn(2+). The helical transmembrane segment at 307 to 327 (IVNMVIFSQLHTFLIFSLFTS) threads the bilayer. Residues 328–357 (IYRNTSFYNTFGFFLEKSTGSFVDPVITKE) lie on the Lumenal side of the membrane. The chain crosses the membrane as a helical span at residues 358-378 (FPIIIGFMLFNDLLTPLECAM). Over 379–453 (QFVMSLISRT…LDYVSEKKKN (75 aa)) the chain is Cytoplasmic. E390 lines the Zn(2+) pocket. D394 serves as the catalytic Proton donor.

This sequence belongs to the peptidase M48A family. Zn(2+) is required as a cofactor.

Its subcellular location is the endoplasmic reticulum membrane. The catalysed reaction is Hydrolyzes the peptide bond -P2-(S-farnesyl or geranylgeranyl)C-P1'-P2'-P3'-COOH where P1' and P2' are amino acids with aliphatic side chains and P3' is any C-terminal residue.. In terms of biological role, proteolytically removes the C-terminal three residues of farnesylated A-factor mating pheromone. Also acts to cleave the N-terminal extension of the pheromone. Does not act on Ras. This chain is CAAX prenyl protease 1 (STE24), found in Saccharomyces cerevisiae (strain ATCC 204508 / S288c) (Baker's yeast).